Reading from the N-terminus, the 82-residue chain is Beta-insect depressant toxin LqqIT2 (82 aa).

The signal sequence occupies residues 1–21 (MKLLLLLIVSASMLIESLVNA). In terms of domain architecture, LCN-type CS-alpha/beta spans 22 to 82 (DGYIRKRDGC…TWKSETNTCG (61 aa)). Cystine bridges form between C31-C81, C35-C56, C42-C63, and C46-C65.

This sequence belongs to the long (4 C-C) scorpion toxin superfamily. Sodium channel inhibitor family. Beta subfamily. In terms of tissue distribution, expressed by the venom gland.

The protein localises to the secreted. Its function is as follows. Depressant insect beta-toxins cause a transient contraction paralysis followed by a slow flaccid paralysis. They bind voltage-independently at site-4 of sodium channels and shift the voltage of activation toward more negative potentials thereby affecting sodium channel activation and promoting spontaneous and repetitive firing. Aside from typical beta-toxin effects, this toxin also affects the inactivation process and ion selectivity of the insect voltage-gated sodium channel. This toxin is active only on insects. Is active on the insect voltage-gated sodium channel para. In vivo, when injected intraperitoneally, it exhibits analgesic activity, increasing hot plate and tail flick withdrawal latencies in a dose-dependent fashion. This phenomenon might be partly due to an inhibitory mechanism activated by noxious stimuli. This chain is Beta-insect depressant toxin LqqIT2, found in Leiurus quinquestriatus quinquestriatus (Egyptian scorpion).